The primary structure comprises 1232 residues: MAEASKYKKLTPIDHVLIRPEMYVGSVDTSSSSMFVFDHEKGRMVWESLKVNHGLLKIVDEILLNASDNIANKGGRMTYIRVHITEAGEITIENDGAGIPIVRSKEHKLYIPEMVFGHLLTSSNYDDTSQNAVAGRHGYGAKLTNILSHRFSVCCRTKGKEFHMSWHDHMRRATAPRVSNVDPKEKNLTRVKFLPDYERFGLDANKISHDMKRVLHKRIMDLAAMFPSIEISLNGVPFAFKSFADYAMLYSSPSSSGEMPPAPFVYESRNGAIAFIPSLTAGTRRIFGVVNGVVTHNGGTHCNAAQEVLQSSLESVEKALKKDNKVIDTNRVLRHFMILVFLVQVQPKFDSQNKARLVSVPTMPRVPRQELMDFLLRMPFLEAHVNTVTGQLADELNKEMGAGRRMSSKSLISSITKLVDATTTRRDPRFVRTLIVTEGDSAKALAQNSLSSDQKRYTGVFPLRGKLLNVRNKNLKRLKNCKELQELFCALGLELGKIYKDAEELRYQRLLVMTDQDADGSHIKGLVINAFEALWPSLLNRNPGFISIFSTPIVKVRLRDKSTHSFFSLKEFHKWQKTHGNVSYTAKYYKALGTSTTAEGKEYFKDMDKHTMRLVVERNDHKLLDSVFDSQEVEWRKDWMTKANAYTGEVDIDRSKKTLTVPDFVHKEMVHFALAGNARALAHAVDGLKPSQRKILWAIMRRSGNESAKVAQLSGYISEVSAFHHGEMSLQETIIKMAQNFTGGNNINLLIPEGQFGSRQQLGNDHAAARYIFTKLSSLARILFPSEDEPLLDYVTEEGQQVEPNHYVPILPLLLCNGSVGIGFGFASNIPPFHPLDVSAAVRSMINGEAAKVVVRRLVPWAVGYQGEVRRGPEGEFIAAGSYQYYVDGRVHVTEIPWTLSIEAFRDHISVLASKDVVQRIADYSGANHVDIDLELTNGAMTTYAECESELSLTQRIYINGTVFSPTGVLTPLEGDLAPVLQWHYDRRLDLYKKRRQRNLGLLEAELAREKSTLKFVTHFREGKIDIVNATDDSLAKTCSKLGMVRVDDSYDYVLRKPITFYTKTSLENLNRKISETEKRIDKLKKTAPVQMWLDELDRFDRAFEEHENTAVATILKERRVNPPTGDVSRNLQQPRLELEEVKVSSSGGKSVPMRVRVRKYVPPPPSKRPHVGQSVGGGGGGGSVRSSAAAVVAHVKAEKKAARARSMQKMLLDVVARQVARVLPRLPWFLF.

ATP is bound by residues Asn-65, Asn-94, 122 to 124 (SSN), 135 to 142 (GRHGYGAK), and 352 to 354 (QNK). The Toprim domain occupies 432-546 (RTLIVTEGDS…SLLNRNPGFI (115 aa)). Glu-438, Asp-515, and Asp-517 together coordinate Mg(2+). The Topo IIA-type catalytic domain maps to 681-1097 (LAHAVDGLKP…APVQMWLDEL (417 aa)). The active-site O-(5'-phospho-DNA)-tyrosine intermediate is the Tyr-771. The interaction with DNA stretch occupies residues 952 to 961 (SLTQRIYING). A disordered region spans residues 1161–1184 (YVPPPPSKRPHVGQSVGGGGGGGS). The segment covering 1175-1184 (SVGGGGGGGS) has biased composition (gly residues).

This sequence belongs to the type II topoisomerase family. Homodimer. It depends on Mg(2+) as a cofactor. The cofactor is Mn(2+). Ca(2+) serves as cofactor.

It localises to the nucleus. It carries out the reaction ATP-dependent breakage, passage and rejoining of double-stranded DNA.. Functionally, control of topological states of DNA by transient breakage and subsequent rejoining of DNA strands. Topoisomerase II makes double-strand breaks. The sequence is that of DNA topoisomerase 2 (TOP2) from Trypanosoma cruzi.